The primary structure comprises 434 residues: Alpha-enolase (434 aa).

Ser-2 carries the N-acetylserine modification. Lys-5 is subject to N6-acetyllysine. Position 40 (Ser-40) interacts with Mg(2+). Tyr-44 is modified (phosphotyrosine). Residue Lys-60 is modified to N6-acetyllysine; alternate. Lys-60 is modified (N6-succinyllysine; alternate). N6-acetyllysine is present on residues Lys-64 and Lys-71. Lys-89 is subject to N6-acetyllysine; alternate. Lys-89 is modified (N6-succinyllysine; alternate). Lys-126 carries the N6-acetyllysine modification. Substrate is bound by residues His-158 and Glu-167. An N6-acetyllysine mark is found at Lys-193 and Lys-199. Lys-202 carries the post-translational modification N6-acetyllysine; alternate. A Glycyl lysine isopeptide (Lys-Gly) (interchain with G-Cter in SUMO2); alternate cross-link involves residue Lys-202. Glu-210 serves as the catalytic Proton donor. N6-acetyllysine; alternate is present on residues Lys-228 and Lys-233. Lys-228 is modified (N6-succinyllysine; alternate). Lys-228 bears the N6-(2-hydroxyisobutyryl)lysine; alternate mark. At Lys-233 the chain carries N6-malonyllysine; alternate. Asp-245 is a binding site for Mg(2+). Lys-256 is modified (N6-acetyllysine). Ser-263 carries the post-translational modification Phosphoserine. An N6-acetyllysine; alternate modification is found at Lys-281. Lys-281 bears the N6-(2-hydroxyisobutyryl)lysine; alternate mark. Lys-285 carries the post-translational modification N6-acetyllysine. Tyr-287 is subject to Phosphotyrosine. Ser-291 is subject to Phosphoserine. Positions 293 and 318 each coordinate Mg(2+). Glu-293 and Asp-318 together coordinate substrate. An N6-acetyllysine mark is found at Lys-335 and Lys-343. Lys-343 (proton acceptor) is an active-site residue. Residues 370–373 (SHRS) and Lys-394 contribute to the substrate site. Positions 405-434 (AKYNQILRIEEELGSKAKFAGRSFRNPLAK) are required for interaction with PLG. Lys-406 bears the N6-acetyllysine mark. Lys-420 carries the post-translational modification N6-acetyllysine; alternate. Lys-420 carries the N6-succinyllysine; alternate modification. Lys-420 is modified (N6-malonyllysine; alternate).

Belongs to the enolase family. As to quaternary structure, mammalian enolase is composed of 3 isozyme subunits, alpha, beta and gamma, which can form homodimers or heterodimers which are cell-type and development-specific. ENO1 interacts with PLG in the neuronal plasma membrane and promotes its activation. The C-terminal lysine is required for this binding. Interacts with ENO4 and PGAM2. Interacts with CMTM6. It depends on Mg(2+) as a cofactor. In terms of processing, ISGylated. Post-translationally, lysine 2-hydroxyisobutyrylation (Khib) by p300/EP300 activates the phosphopyruvate hydratase activity. As to expression, expressed in flagella of epididymal sperm. The alpha/alpha homodimer is expressed in embryo and in most adult tissues. The alpha/beta heterodimer and the beta/beta homodimer are found in striated muscle, and the alpha/gamma heterodimer and the gamma/gamma homodimer in neurons.

It localises to the cytoplasm. The protein localises to the cell membrane. It catalyses the reaction (2R)-2-phosphoglycerate = phosphoenolpyruvate + H2O. The protein operates within carbohydrate degradation; glycolysis; pyruvate from D-glyceraldehyde 3-phosphate: step 4/5. Its function is as follows. Glycolytic enzyme that catalyzes the conversion of 2-phosphoglycerate to phosphoenolpyruvate. In addition to glycolysis, involved in various processes such as growth control, hypoxia tolerance and allergic responses. May also function in the intravascular and pericellular fibrinolytic system due to its ability to serve as a receptor and activator of plasminogen on the cell surface of several cell-types such as leukocytes and neurons. Stimulates immunoglobulin production. The sequence is that of Alpha-enolase (Eno1) from Rattus norvegicus (Rat).